Reading from the N-terminus, the 127-residue chain is Histone H2B.2 (127 aa).

Positions 1-35 (MAPKAEKKPASKAPAAKKTTASTDASKKRTKTRKE) are disordered. N6-acetyllysine; alternate is present on residues K7 and K8. Residues K7 and K8 each participate in a glycyl lysine isopeptide (Lys-Gly) (interchain with G-Cter in SUMO); alternate cross-link. S11 is subject to Phosphoserine. The span at 11 to 24 (SKAPAAKKTTASTD) shows a compositional bias: low complexity. An N6-acetyllysine modification is found at K12. Residue K120 forms a Glycyl lysine isopeptide (Lys-Gly) (interchain with G-Cter in ubiquitin) linkage.

Belongs to the histone H2B family. The nucleosome is a histone octamer containing two molecules each of H2A, H2B, H3 and H4 assembled in one H3-H4 heterotetramer and two H2A-H2B heterodimers. The octamer wraps approximately 147 bp of DNA. In terms of processing, monoubiquitinated by the UBC2-BRE1 complex to form H2BK123ub1. H2BK123ub1 gives a specific tag for epigenetic transcriptional activation and is also prerequisite for H3K4me and H3K79me formation. H2BK123ub1 also modulates the formation of double-strand breaks during meiosis and is a prerequisite for DNA-damage checkpoint activation. Phosphorylated by STE20 to form H2BS10ph during progression through meiotic prophase. May be correlated with chromosome condensation. Post-translationally, acetylation of N-terminal lysines and particularly formation of H2BK11ac has a positive effect on transcription. In terms of processing, sumoylation to form H2BK6su or H2BK7su occurs preferentially near the telomeres and represses gene transcription.

The protein localises to the nucleus. It is found in the chromosome. Core component of nucleosome. Nucleosomes wrap and compact DNA into chromatin, limiting DNA accessibility to the cellular machineries which require DNA as a template. Histones thereby play a central role in transcription regulation, DNA repair, DNA replication and chromosomal stability. DNA accessibility is regulated via a complex set of post-translational modifications of histones, also called histone code, and nucleosome remodeling. The protein is Histone H2B.2 (HTB2) of Eremothecium gossypii (strain ATCC 10895 / CBS 109.51 / FGSC 9923 / NRRL Y-1056) (Yeast).